The following is a 264-amino-acid chain: Triosephosphate isomerase (264 aa).

12–14 (NWK) is a binding site for substrate. H104 serves as the catalytic Electrophile. E176 acts as the Proton acceptor in catalysis. Substrate-binding positions include G182, S222, and 243–244 (GG).

The protein belongs to the triosephosphate isomerase family. Homodimer.

Its subcellular location is the cytoplasm. The enzyme catalyses D-glyceraldehyde 3-phosphate = dihydroxyacetone phosphate. It functions in the pathway carbohydrate biosynthesis; gluconeogenesis. The protein operates within carbohydrate degradation; glycolysis; D-glyceraldehyde 3-phosphate from glycerone phosphate: step 1/1. Functionally, involved in the gluconeogenesis. Catalyzes stereospecifically the conversion of dihydroxyacetone phosphate (DHAP) to D-glyceraldehyde-3-phosphate (G3P). The protein is Triosephosphate isomerase of Bifidobacterium adolescentis (strain ATCC 15703 / DSM 20083 / NCTC 11814 / E194a).